The chain runs to 232 residues: Triggering receptor expressed on myeloid cells 1 (232 aa).

The signal sequence occupies residues 1 to 20 (MRKAGVWGLLWMLFIEEIQA). In terms of domain architecture, Ig-like V-type spans 21 to 125 (AAEVFEEKCT…DPIILFHPVR (105 aa)). The Extracellular portion of the chain corresponds to 21-203 (AAEVFEEKCT…THVNRAPGIS (183 aa)). Cysteine 41 and cysteine 109 form a disulfide bridge. The segment at 152 to 186 (PLPVTTKLRPRPRPRPKPVTQPIPTSADRLSSPGF) is disordered. Asparagine 192 carries an N-linked (GlcNAc...) asparagine glycan. A helical transmembrane segment spans residues 204 to 224 (IIIPAACGLLSKTLVFIGLFA). At 225-232 (VTHRSFAS) the chain is on the cytoplasmic side.

Monomer. Homomultimer; when activated. Interacts with TYROBP/DAP12. Interacts with TLR4. As to expression, detected in bone marrow, tongue, lung, liver, thymus, spleen, jejunum, ileum and lymph nodes.

The protein resides in the cell membrane. Cell surface receptor that plays important roles in innate and adaptive immunity by amplifying inflammatory responses. Upon activation by various ligands such as PGLYRP1, HMGB1 or HSP70, multimerizes and forms a complex with transmembrane adapter TYROBP/DAP12. In turn, initiates a SYK-mediated cascade of tyrosine phosphorylation, activating multiple downstream mediators such as BTK, MAPK1, MAPK3 or phospholipase C-gamma. This cascade promotes the neutrophil- and macrophage-mediated release of pro-inflammatory cytokines and/or chemokines, as well as their migration and thereby amplifies inflammatory responses that are triggered by bacterial and fungal infections. By also promoting the amplification of inflammatory signals that are initially triggered by Toll-like receptor (TLR) and NOD-like receptor engagement, plays a major role in the pathophysiology of acute and chronic inflammatory diseases of different etiologies including septic shock and atherosclerosis. In Bos taurus (Bovine), this protein is Triggering receptor expressed on myeloid cells 1 (TREM1).